A 179-amino-acid polypeptide reads, in one-letter code: Large ribosomal subunit protein uL5 (179 aa).

This sequence belongs to the universal ribosomal protein uL5 family. As to quaternary structure, part of the 50S ribosomal subunit; part of the 5S rRNA/L5/L18/L25 subcomplex. Contacts the 5S rRNA and the P site tRNA. Forms a bridge to the 30S subunit in the 70S ribosome.

This is one of the proteins that bind and probably mediate the attachment of the 5S RNA into the large ribosomal subunit, where it forms part of the central protuberance. In the 70S ribosome it contacts protein S13 of the 30S subunit (bridge B1b), connecting the 2 subunits; this bridge is implicated in subunit movement. Contacts the P site tRNA; the 5S rRNA and some of its associated proteins might help stabilize positioning of ribosome-bound tRNAs. The chain is Large ribosomal subunit protein uL5 from Rickettsia felis (strain ATCC VR-1525 / URRWXCal2) (Rickettsia azadi).